The following is a 128-amino-acid chain: KRAB domain-containing protein 1 (128 aa).

The region spanning 15-86 (VAFEDVAVYF…QPQGVLSRND (72 aa)) is the KRAB domain.

This is KRAB domain-containing protein 1 (KRBOX1) from Homo sapiens (Human).